Here is an 88-residue protein sequence, read N- to C-terminus: Outer membrane protein H.8 (88 aa).

The signal sequence occupies residues 1-17 (MKKSLFAAALLSLALAA). Residue cysteine 18 is the site of N-palmitoyl cysteine attachment. A lipid anchor (S-diacylglycerol cysteine) is attached at cysteine 18. Tandem repeats lie at residues 23–27 (AAEAP), 28–32 (AAEAS), 33–37 (STEAP), 38–42 (AAEAP), 43–47 (AAEAP), 48–52 (AAEAA), 53–57 (AAEAP), 58–62 (AAEAP), 63–67 (AAEAP), 68–72 (AAEAA), 73–77 (ATEAP), 78–82 (AAEAP), and 83–87 (AAEAA). The tract at residues 23–87 (AAEAPAAEAS…AAEAPAAEAA (65 aa)) is 13 X 5 AA tandem repeats of [AS]-[AT]-E-A-[PAS]. Positions 23–88 (AAEAPAAEAS…AEAPAAEAAK (66 aa)) are disordered. Residues 25–88 (EAPAAEASST…AEAPAAEAAK (64 aa)) are compositionally biased toward low complexity.

Its subcellular location is the cell outer membrane. The chain is Outer membrane protein H.8 from Neisseria gonorrhoeae (strain ATCC 700825 / FA 1090).